A 275-amino-acid chain; its full sequence is Large ribosomal subunit protein uL2c (275 aa).

Positions 219-254 are disordered; the sequence is TVRGSVMNPCDHPHGGGEGRAPIGRTRPLTPWGKPA.

The protein belongs to the universal ribosomal protein uL2 family. Part of the 50S ribosomal subunit.

The protein localises to the plastid. The protein resides in the chloroplast. This Phaeodactylum tricornutum (strain CCAP 1055/1) protein is Large ribosomal subunit protein uL2c (rpl2).